A 1028-amino-acid chain; its full sequence is Antigenic heat-stable 120 kDa protein (1028 aa).

2 stretches are compositionally biased toward polar residues: residues 359 to 384 and 391 to 400; these read GQSK…QYKQ and PTNQPLQPET. A disordered region spans residues 359-405; that stretch reads GQSKEQPLITPQQTTSSSVEPPQYKQQVPPITPTNQPLQPETSQMQQ.

It is found in the cytoplasm. This Rickettsia africae protein is Antigenic heat-stable 120 kDa protein (sca4).